Reading from the N-terminus, the 211-residue chain is Small ribosomal subunit protein uS3 (211 aa).

The region spanning 39–107 (VTKYVESSFA…VPSLNVVEVK (69 aa)) is the KH type-2 domain.

The protein belongs to the universal ribosomal protein uS3 family. As to quaternary structure, part of the 30S ribosomal subunit. Forms a tight complex with proteins S10 and S14.

Functionally, binds the lower part of the 30S subunit head. Binds mRNA in the 70S ribosome, positioning it for translation. The protein is Small ribosomal subunit protein uS3 of Neorickettsia sennetsu (strain ATCC VR-367 / Miyayama) (Ehrlichia sennetsu).